The chain runs to 377 residues: Histone deacetylase 8 (377 aa).

Residues 14-324 form a histone deacetylase region; the sequence is LPPVYIYSPE…WTYLTGVILG (311 aa). A Phosphoserine modification is found at Ser39. Residue Asp101 participates in substrate binding. His143 serves as the catalytic Proton acceptor. Gly151 is a binding site for substrate. A divalent metal cation contacts are provided by Asp178, His180, and Asp267. Tyr306 is a binding site for substrate.

It belongs to the histone deacetylase family. HD type 1 subfamily. As to quaternary structure, interacts with CBFA2T3. Interacts with phosphorylated SMG5/EST1B; this interaction protects SMG5 from ubiquitin-mediated degradation. Associates with alpha-SMA (smooth muscle alpha-actin). The cofactor is a divalent metal cation. Post-translationally, phosphorylated by PKA on serine 39. Phosphorylation reduces deacetylase activity observed preferentially on histones H3 and H4.

The protein resides in the nucleus. The protein localises to the chromosome. It localises to the cytoplasm. It carries out the reaction N(6)-acetyl-L-lysyl-[histone] + H2O = L-lysyl-[histone] + acetate. It catalyses the reaction N(6)-acetyl-L-lysyl-[protein] + H2O = L-lysyl-[protein] + acetate. The enzyme catalyses N(6)-(2E)-butenoyl-L-lysyl-[protein] + H2O = (2E)-2-butenoate + L-lysyl-[protein]. Its activity is regulated as follows. Its activity is inhibited by trichostatin A (TSA) and butyrate, 2 well known histone deacetylase inhibitors. histone deacetylase inhibitor. Histone deacetylase that catalyzes the deacetylation of lysine residues on the N-terminal part of the core histones (H2A, H2B, H3 and H4). Histone deacetylation gives a tag for epigenetic repression and plays an important role in transcriptional regulation, cell cycle progression and developmental events. Histone deacetylases act via the formation of large multiprotein complexes. Also involved in the deacetylation of cohesin complex protein SMC3 regulating release of cohesin complexes from chromatin. May play a role in smooth muscle cell contractility. In addition to protein deacetylase activity, also has protein-lysine deacylase activity: acts as a protein decrotonylase by mediating decrotonylation ((2E)-butenoyl) of histones. This is Histone deacetylase 8 (Hdac8) from Mus musculus (Mouse).